The primary structure comprises 409 residues: MTMEVSKKKGGDFQQCHELIPGLPSELALECLVRVPFQFQSAMRSVCRSWRSLLSDSSFIQERRRCGKTELLLCLVQPLTPPIPASKSVDETLMVDEKKSEDESHPRVFCTPRFGLSVYNAAMSTWHRVAFPEEEQIPLFCECVVLQDAGKILLIGGWDPETLQPTRDVYVLEFAGRKWRRGAPMKESRSFFACASVSPTKVYVAGGHDDQKNALRSAEVYDVEKDEWSSVTPMTEGRDECQGFAVGMGLRFCVLSGYGTESQGRFRSDGEIYDPATDSWSRIDNVWRFPDTSPRGRTAGDFRSSSTLWCFTDTDLQSERRWETNDDSRNLKLDLQSIQLPMTGSSVFAGSLGGESVVMIGGKRESEGEGEGGVMMKMTTEKKMGKWSHHVHIPCDFSTLPFSHASIYV.

Residues 17 to 63 form the F-box domain; it reads HELIPGLPSELALECLVRVPFQFQSAMRSVCRSWRSLLSDSSFIQER. 4 Kelch repeats span residues 98–148, 151–199, 201–248, and 251–300; these read KKSE…VLQD, KILL…SVSP, KVYV…AVGM, and RFCV…RTAG.

The chain is F-box/kelch-repeat protein At2g44130 from Arabidopsis thaliana (Mouse-ear cress).